A 663-amino-acid chain; its full sequence is Probable rhamnogalacturonate lyase B (663 aa).

The signal sequence occupies residues 1-19 (MRLRTSLGVASACASVASA). N-linked (GlcNAc...) asparagine glycosylation is found at N27, N110, N143, N239, N285, N495, N535, N569, N597, and N638.

The protein belongs to the polysaccharide lyase 4 family.

The protein resides in the secreted. The catalysed reaction is Endotype eliminative cleavage of L-alpha-rhamnopyranosyl-(1-&gt;4)-alpha-D-galactopyranosyluronic acid bonds of rhamnogalacturonan I domains in ramified hairy regions of pectin leaving L-rhamnopyranose at the reducing end and 4-deoxy-4,5-unsaturated D-galactopyranosyluronic acid at the non-reducing end.. Functionally, pectinolytic enzymes consist of four classes of enzymes: pectin lyase, polygalacturonase, pectin methylesterase and rhamnogalacturonase. Degrades the rhamnogalacturonan I (RG-I) backbone of pectin. The chain is Probable rhamnogalacturonate lyase B (rglB) from Aspergillus flavus (strain ATCC 200026 / FGSC A1120 / IAM 13836 / NRRL 3357 / JCM 12722 / SRRC 167).